The chain runs to 116 residues: Toxin CSTX-10 (116 aa).

The signal sequence occupies residues 1-20 (MKVLVIFAVLSLVIFSNCSA). Residues 21–47 (ETDEDFFGEESFEADDIIPFIAKEQVR) constitute a propeptide that is removed on maturation. Intrachain disulfides connect Cys-53-Cys-68, Cys-60-Cys-77, Cys-67-Cys-94, and Cys-79-Cys-92.

Expressed by the venom gland.

It is found in the secreted. Its subcellular location is the target cell membrane. Spider venom toxin that shows calcium channel blocking activity and exhibits cytolytic activity by affecting the outer leaflet curvature and/or pore formation across the membrane. It blocks L-type calcium channels (Cav1/CACNA1) in mammalian neurons at nanomolar concentrations. Furthermore, it produces a slow voltage-independent block of mid/low and high voltage-activated calcium channels in cockroach neurons. Potassium ions, histamine, M-ctenitoxin-Cs1a (AC P83619), CSTX-9 (AC P58604), and CSTX-13 (AC P83919) synergistically increase the insecticidal activity of this toxin. In vivo, it causes paralysis in blow flies and provokes death in drosophila. This chain is Toxin CSTX-10, found in Cupiennius salei (American wandering spider).